The chain runs to 196 residues: Glutathione-specific gamma-glutamylcyclotransferase 1 (196 aa).

15-20 (IFGYGS) lines the substrate pocket. The active-site Proton acceptor is the Glu95.

Belongs to the gamma-glutamylcyclotransferase family. ChaC subfamily.

It is found in the cytoplasm. Its subcellular location is the cytosol. The protein localises to the golgi apparatus. It localises to the trans-Golgi network. It catalyses the reaction glutathione = L-cysteinylglycine + 5-oxo-L-proline. Functionally, catalyzes the cleavage of glutathione into 5-oxo-L-proline and a Cys-Gly dipeptide. Acts specifically on glutathione, but not on other gamma-glutamyl peptides. Glutathione depletion is an important factor for apoptosis initiation and execution. Acts as a pro-apoptotic component of the unfolded protein response pathway by mediating the pro-apoptotic effects of the ATF4-ATF3-DDIT3/CHOP cascade. Negative regulator of Notch signaling pathway involved in embryonic neurogenesis: acts by inhibiting Notch cleavage by furin, maintaining Notch in an immature inactive form, thereby promoting neurogenesis in embryos. This Danio rerio (Zebrafish) protein is Glutathione-specific gamma-glutamylcyclotransferase 1.